We begin with the raw amino-acid sequence, 773 residues long: C-Maf-inducing protein (773 aa).

Positions 1 to 28 (MDVTSSSGGGDPRQIEETKPLLGSDVSG) are disordered. One can recognise a PH domain in the interval 54 to 163 (LLQEGDIQVC…HSLQWKKKIY (110 aa)). Residues Ser-349, Ser-377, Ser-382, and Ser-660 each carry the phosphoserine modification. LRR repeat units follow at residues 663-686 (NLEN…IKLP), 687-707 (SLKQ…RLLS), 712-732 (MLQV…LALS), and 736-756 (SLCS…EDLK).

In terms of assembly, interacts with FLNA.

Its subcellular location is the nucleus. It localises to the cytoplasm. In terms of biological role, plays a role in T-cell signaling pathway. The chain is C-Maf-inducing protein (Cmip) from Mus musculus (Mouse).